The sequence spans 395 residues: E3 ubiquitin-protein ligase RDUF1 (395 aa).

2 disordered regions span residues 1-22 and 107-130; these read MMPN…TTTT and PVIV…EGDG. The segment covering 9–22 has biased composition (low complexity); that stretch reads TITPTTESTTTTTT. A compositionally biased stretch (basic and acidic residues) spans 121 to 130; the sequence is ERVENEEGDG. The RING-type; atypical zinc-finger motif lies at 215 to 256; it reads CAVCTEVFEAGIEGREMPCKHIFHGDCIVPWLSIRNSCPVCR.

Expressed in root tips, leaf tips, junction of carpels and pedicels, stigma, anthers, pollen, vasculature of sepals and petals, immature seeds and embryos.

The protein resides in the cytoplasm. The protein localises to the cytosol. Its subcellular location is the nucleus. It catalyses the reaction S-ubiquitinyl-[E2 ubiquitin-conjugating enzyme]-L-cysteine + [acceptor protein]-L-lysine = [E2 ubiquitin-conjugating enzyme]-L-cysteine + N(6)-ubiquitinyl-[acceptor protein]-L-lysine.. It participates in protein modification; protein ubiquitination. E3 ubiquitin-protein ligase involved in the positive regulation of abscisic acid-dependent drought stress responses. Involved in the positive regulation of responses to salt and osmotic stresses during seed germination and early seedling development. Possesses E3 ubiquitin ligase activity in vitro. The sequence is that of E3 ubiquitin-protein ligase RDUF1 from Arabidopsis thaliana (Mouse-ear cress).